The sequence spans 320 residues: Cytochrome f (320 aa).

A signal peptide spans 1–35 (MHTKNLFYSRPQQITQYLSAFLMMVILTRTSISSA). Tyr36, Cys56, Cys59, and His60 together coordinate heme. Residues 286-306 (VQVLLFFFASIILAQIFLVLK) form a helical membrane-spanning segment.

This sequence belongs to the cytochrome f family. In terms of assembly, the 4 large subunits of the cytochrome b6-f complex are cytochrome b6, subunit IV (17 kDa polypeptide, petD), cytochrome f and the Rieske protein, while the 4 small subunits are PetG, PetL, PetM and PetN. The complex functions as a dimer. Heme serves as cofactor.

The protein resides in the plastid thylakoid membrane. In terms of biological role, component of the cytochrome b6-f complex, which mediates electron transfer between photosystem II (PSII) and photosystem I (PSI), cyclic electron flow around PSI, and state transitions. This Cuscuta obtusiflora (Peruvian dodder) protein is Cytochrome f.